A 96-amino-acid chain; its full sequence is Evasin P1078 (96 aa).

The N-terminal stretch at 1–28 (MAFNTITFLQWAVFVAILFNMNLHSASA) is a signal peptide. 3 cysteine pairs are disulfide-bonded: cysteine 48/cysteine 67, cysteine 52/cysteine 69, and cysteine 63/cysteine 80. A glycan (N-linked (GlcNAc...) asparagine) is linked at asparagine 51. Asparagine 74 is a glycosylation site (N-linked (GlcNAc...) asparagine).

It localises to the secreted. Functionally, salivary chemokine-binding protein which binds to host chemokines CXCL1, CXCL2, CXCL3, CXCL5, CXCL6, CXCL11 and CXCL13. This is Evasin P1078 from Ixodes ricinus (Common tick).